The following is a 204-amino-acid chain: Putative AgrB-like protein (204 aa).

The next 5 membrane-spanning stretches (helical) occupy residues valine 51–tryptophan 73, leucine 87–isoleucine 107, asparagine 111–alanine 131, alanine 151–alanine 168, and leucine 173–tyrosine 190.

The protein belongs to the AgrB family.

It localises to the cell membrane. Its function is as follows. May be involved in the proteolytic processing of a quorum sensing system signal molecule precursor. The protein is Putative AgrB-like protein of Listeria innocua serovar 6a (strain ATCC BAA-680 / CLIP 11262).